Here is a 209-residue protein sequence, read N- to C-terminus: Probable glutathione peroxidase 8 (209 aa).

At methionine 1 the chain carries N-acetylmethionine. The helical transmembrane segment at 18-40 (IFAVLLSMVLCTVMLFLLQLKFL) threads the bilayer. Cysteine 79 is an active-site residue.

It belongs to the glutathione peroxidase family.

It localises to the membrane. The catalysed reaction is 2 glutathione + H2O2 = glutathione disulfide + 2 H2O. This Mus musculus (Mouse) protein is Probable glutathione peroxidase 8 (Gpx8).